A 198-amino-acid polypeptide reads, in one-letter code: UPF0098 protein PH1269 (198 aa).

This sequence belongs to the UPF0098 family.

The polypeptide is UPF0098 protein PH1269 (Pyrococcus horikoshii (strain ATCC 700860 / DSM 12428 / JCM 9974 / NBRC 100139 / OT-3)).